The following is a 435-amino-acid chain: Ribosomal protein uS12 methylthiotransferase RimO (435 aa).

An MTTase N-terminal domain is found at 3–113; that stretch reads HKVGFVSLGC…VVNAVHQHLP (111 aa). The [4Fe-4S] cluster site is built by Cys-12, Cys-48, Cys-77, Cys-144, Cys-148, and Cys-151. Residues 130-367 enclose the Radical SAM core domain; sequence LTPRHYAYLK…MQVQAEISRN (238 aa). In terms of domain architecture, TRAM spans 370–435; the sequence is KNKIGSTQTV…DDYDLYASLV (66 aa).

This sequence belongs to the methylthiotransferase family. RimO subfamily. It depends on [4Fe-4S] cluster as a cofactor.

It is found in the cytoplasm. It catalyses the reaction L-aspartate(89)-[ribosomal protein uS12]-hydrogen + (sulfur carrier)-SH + AH2 + 2 S-adenosyl-L-methionine = 3-methylsulfanyl-L-aspartate(89)-[ribosomal protein uS12]-hydrogen + (sulfur carrier)-H + 5'-deoxyadenosine + L-methionine + A + S-adenosyl-L-homocysteine + 2 H(+). Catalyzes the methylthiolation of an aspartic acid residue of ribosomal protein uS12. This is Ribosomal protein uS12 methylthiotransferase RimO from Legionella pneumophila (strain Lens).